The following is a 141-amino-acid chain: Hemoglobin subunit alpha (141 aa).

Positions valine 1 to arginine 141 constitute a Globin domain. A Phosphoserine modification is found at serine 3. Lysine 7 carries the post-translational modification N6-succinyllysine. Position 8 is a phosphothreonine (threonine 8). Position 11 is an N6-succinyllysine (lysine 11). The residue at position 16 (lysine 16) is an N6-acetyllysine; alternate. Lysine 16 carries the post-translational modification N6-succinyllysine; alternate. Phosphotyrosine is present on tyrosine 24. Phosphoserine is present on serine 35. Residue lysine 40 is modified to N6-succinyllysine. Phosphoserine is present on serine 49. Histidine 58 is a binding site for O2. A heme b-binding site is contributed by histidine 87. Serine 102 is modified (phosphoserine). Threonine 108 carries the phosphothreonine modification. A phosphoserine mark is found at serine 124 and serine 131. Threonine 134 and threonine 137 each carry phosphothreonine. At serine 138 the chain carries Phosphoserine.

Belongs to the globin family. Heterotetramer of two alpha chains and two beta chains. In terms of tissue distribution, red blood cells.

Its function is as follows. Involved in oxygen transport from the lung to the various peripheral tissues. Functionally, hemopressin acts as an antagonist peptide of the cannabinoid receptor CNR1. Hemopressin-binding efficiently blocks cannabinoid receptor CNR1 and subsequent signaling. The polypeptide is Hemoglobin subunit alpha (HBA) (Gorilla gorilla gorilla (Western lowland gorilla)).